We begin with the raw amino-acid sequence, 180 residues long: Adenine phosphoribosyltransferase (180 aa).

An N-acetylserine modification is found at Ser2. Residues Ser15 and Ser30 each carry the phosphoserine modification. Tyr60 is subject to Phosphotyrosine. Position 66 is a phosphoserine (Ser66). N6-acetyllysine is present on Lys114. Residue Thr135 is modified to Phosphothreonine.

It belongs to the purine/pyrimidine phosphoribosyltransferase family. In terms of assembly, homodimer.

The protein resides in the cytoplasm. It catalyses the reaction AMP + diphosphate = 5-phospho-alpha-D-ribose 1-diphosphate + adenine. It functions in the pathway purine metabolism; AMP biosynthesis via salvage pathway; AMP from adenine: step 1/1. Its function is as follows. Catalyzes a salvage reaction resulting in the formation of AMP, that is energically less costly than de novo synthesis. The protein is Adenine phosphoribosyltransferase of Mastomys natalensis (African soft-furred rat).